The sequence spans 859 residues: Cleavage factor two protein 2 (859 aa).

A disordered region spans residues 560–611 (PDDSDNVNQNSRKRPLKDGAKTTSPVNEEDNKNEEEDGYNMSDPISKRSKHR). Acidic residues predominate over residues 586 to 597 (NEEDNKNEEEDG).

As to quaternary structure, component of the cleavage and polyadenylation factor (CPF) complex, which is composed of at least PTI1, SYC1, SSU72, GLC7, MPE1, REF2, PFS2, PTA1, YSH1/BRR5, SWD2, CFT2/YDH1, YTH1, CFT1/YHH1, FIP1 and PAP1. Interacts with the CTD domain of RPB1/RNA polymerase II; the interaction is enhanced upon phosphorylation of the RPB1 CTD domain. Interacts with PCF11.

It is found in the nucleus. Functionally, RNA-binding component of the cleavage and polyadenylation factor (CPF) complex, which plays a key role in polyadenylation-dependent pre-mRNA 3'-end formation and cooperates with cleavage factors including the CFIA complex and NAB4/CFIB. May be involved in poly(A)-site recognition. May be involved in the association of the CPF, CPFIA and RNA polymerase II complexes. The sequence is that of Cleavage factor two protein 2 (CFT2) from Saccharomyces cerevisiae (strain ATCC 204508 / S288c) (Baker's yeast).